We begin with the raw amino-acid sequence, 132 residues long: Antileukoproteinase (132 aa).

Residues 1-25 (MKSSGLFPFLVLLALGTLAPWAVEG) form the signal peptide. WAP domains follow at residues 28-76 (KSFK…LDPV) and 82-130 (TRRK…VSPV). Disulfide bonds link cysteine 35–cysteine 64, cysteine 43–cysteine 68, cysteine 51–cysteine 63, cysteine 57–cysteine 72, cysteine 89–cysteine 118, cysteine 96–cysteine 122, cysteine 105–cysteine 117, and cysteine 111–cysteine 126. The segment at 84 to 132 (RKPGKCPVTYGQCLMLNPPNFCEMDGQCKRDLKCCMGMCGKSCVSPVKA) is elastase inhibitory domain.

In terms of assembly, interacts with GRN; interaction protects progranulin from proteolysis. Detected in blood plasma. Detected in bone marrow myeloid cells. Detected in airway sputum. Detected in parotid gland secretions. Detected in seminal plasma (at protein level). Detected in uterus cervix.

The protein resides in the secreted. Functionally, acid-stable proteinase inhibitor with strong affinities for trypsin, chymotrypsin, elastase, and cathepsin G. Modulates the inflammatory and immune responses after bacterial infection, and after infection by the intracellular parasite L.major. Down-regulates responses to bacterial lipopolysaccharide (LPS). Plays a role in regulating the activation of NF-kappa-B and inflammatory responses. Has antimicrobial activity against mycobacteria, but not against salmonella. Contributes to normal resistance against infection by M.tuberculosis. Required for normal resistance to infection by L.major. Required for normal wound healing, probably by preventing tissue damage by limiting protease activity. Together with ELANE, required for normal differentiation and proliferation of bone marrow myeloid cells. This chain is Antileukoproteinase (SLPI), found in Homo sapiens (Human).